We begin with the raw amino-acid sequence, 343 residues long: Farnesyl pyrophosphate synthase (343 aa).

3 residues coordinate isopentenyl diphosphate: lysine 49, arginine 52, and glutamine 87. 2 residues coordinate Mg(2+): aspartate 94 and aspartate 98. Residue arginine 103 coordinates dimethylallyl diphosphate. An isopentenyl diphosphate-binding site is contributed by arginine 104. 5 residues coordinate dimethylallyl diphosphate: lysine 191, threonine 192, glutamine 230, lysine 247, and lysine 256.

It belongs to the FPP/GGPP synthase family. Requires Mg(2+) as cofactor. In terms of tissue distribution, expressed both in apical and sub-apical cells of glandular secretory trichomes.

It is found in the cytoplasm. The protein resides in the nucleus. It catalyses the reaction isopentenyl diphosphate + dimethylallyl diphosphate = (2E)-geranyl diphosphate + diphosphate. The enzyme catalyses isopentenyl diphosphate + (2E)-geranyl diphosphate = (2E,6E)-farnesyl diphosphate + diphosphate. It functions in the pathway isoprenoid biosynthesis; farnesyl diphosphate biosynthesis; farnesyl diphosphate from geranyl diphosphate and isopentenyl diphosphate: step 1/1. Its pathway is sesquiterpene biosynthesis. The protein operates within isoprenoid biosynthesis; geranyl diphosphate biosynthesis; geranyl diphosphate from dimethylallyl diphosphate and isopentenyl diphosphate: step 1/1. Involved in the biosynthesis of the antimalarial endoperoxide artemisinin. Catalyzes the sequential condensation of isopentenyl pyrophosphate with the allylic pyrophosphates, dimethylallyl pyrophosphate, and then with the resultant geranylpyrophosphate to the ultimate product farnesyl pyrophosphate. Promotes anti-malarial and antimicrobial (toward Gram-positive bacteria B.subtilis and S.aureus) activities of plant crude extract probably by triggering artemisinin levels. This chain is Farnesyl pyrophosphate synthase, found in Artemisia annua (Sweet wormwood).